A 475-amino-acid chain; its full sequence is Sulfate adenylyltransferase subunit 1 (475 aa).

The region spanning 25 to 239 (KSLLRFLTCG…EVLETVEIQR (215 aa)) is the tr-type G domain. The tract at residues 34-41 (GSVDDGKS) is G1. Position 34–41 (34–41 (GSVDDGKS)) interacts with GTP. Residues 92–96 (GITID) are G2. Residues 113–116 (DTPG) form a G3 region. GTP contacts are provided by residues 113–117 (DTPGH) and 168–171 (NKMD). Positions 168 to 171 (NKMD) are G4. A G5 region spans residues 206 to 208 (SAL).

Belongs to the TRAFAC class translation factor GTPase superfamily. Classic translation factor GTPase family. CysN/NodQ subfamily. In terms of assembly, heterodimer composed of CysD, the smaller subunit, and CysN.

The enzyme catalyses sulfate + ATP + H(+) = adenosine 5'-phosphosulfate + diphosphate. The protein operates within sulfur metabolism; hydrogen sulfide biosynthesis; sulfite from sulfate: step 1/3. In terms of biological role, with CysD forms the ATP sulfurylase (ATPS) that catalyzes the adenylation of sulfate producing adenosine 5'-phosphosulfate (APS) and diphosphate, the first enzymatic step in sulfur assimilation pathway. APS synthesis involves the formation of a high-energy phosphoric-sulfuric acid anhydride bond driven by GTP hydrolysis by CysN coupled to ATP hydrolysis by CysD. This is Sulfate adenylyltransferase subunit 1 from Shigella sonnei (strain Ss046).